Consider the following 351-residue polypeptide: N6-Methyl-AMP deaminase (351 aa).

Histidine 23 and histidine 25 together coordinate Zn(2+). N(6)-methyl-AMP is bound by residues histidine 25, asparagine 27, histidine 73, 105-108, aspartate 147, and glycine 180; that span reads STPR. Histidine 207 is a binding site for Zn(2+). N(6)-methyl-AMP contacts are provided by glutamate 210, aspartate 292, and aspartate 293. Residue glutamate 210 is the Proton donor of the active site. Aspartate 292 contacts Zn(2+).

The protein belongs to the metallo-dependent hydrolases superfamily. Adenosine and AMP deaminases family. Monomer. The cofactor is Zn(2+).

The catalysed reaction is N(6)-methyl-AMP + H2O + H(+) = IMP + methylamine. Its function is as follows. Catalyzes the hydrolysis of the free cytosolic methylated adenosine nucleotide N(6)-methyl-AMP (N6-mAMP) to produce inositol monophosphate (IMP) and methylamine. Is required for the catabolism of cytosolic N6-mAMP, which is derived from the degradation of mRNA containing N6-methylated adenine (m6A). The protein is N6-Methyl-AMP deaminase of Bos taurus (Bovine).